The following is a 127-amino-acid chain: Mediator of RNA polymerase II transcription subunit 9 (127 aa).

Positions 95–119 (QKEQEIEAKKRVHRQLRQRVEEIAG) form a coiled coil.

It belongs to the Mediator complex subunit 9 family. In terms of assembly, component of the Mediator complex.

The protein localises to the nucleus. Component of the Mediator complex, a coactivator involved in the regulated transcription of nearly all RNA polymerase II-dependent genes. Mediator functions as a bridge to convey information from gene-specific regulatory proteins to the basal RNA polymerase II transcription machinery. Mediator is recruited to promoters by direct interactions with regulatory proteins and serves as a scaffold for the assembly of a functional preinitiation complex with RNA polymerase II and the general transcription factors. The chain is Mediator of RNA polymerase II transcription subunit 9 (CSE2) from Eremothecium gossypii (strain ATCC 10895 / CBS 109.51 / FGSC 9923 / NRRL Y-1056) (Yeast).